The following is a 289-amino-acid chain: Heme oxygenase 1 (289 aa).

At 1-266 the chain is on the cytoplasmic side; it reads MERPQLDSMS…SQISTSSSQT (266 aa). Heme b contacts are provided by K18, H25, Y134, and R183. The interval 225–261 is disordered; it reads HKDQSPSQTEFLRQRPASLVQDTTSAETPRGKSQIST. Phosphoserine is present on residues S229 and S242. Positions 244–261 are enriched in polar residues; the sequence is VQDTTSAETPRGKSQIST. Residues 267–289 form a helical; Anchor for type IV membrane protein membrane-spanning segment; it reads PLLRWVLTLSFLLATVAVGIYAM.

It belongs to the heme oxygenase family. As to quaternary structure, homodimer and higher order homooligomer. Oligomerization is crucial for its stability and function in the endoplasmic reticulum. Interacts with FLVCR2; this interaction is potentiated in the presence of heme. Post-translationally, a soluble form arises by proteolytic removal of the membrane anchor.

It is found in the endoplasmic reticulum membrane. It carries out the reaction heme b + 3 reduced [NADPH--hemoprotein reductase] + 3 O2 = biliverdin IXalpha + CO + Fe(2+) + 3 oxidized [NADPH--hemoprotein reductase] + 3 H2O + H(+). Its activity is regulated as follows. Inhibited by metalloporphyrins such as Sn- and Zn-protoporphyrins. Functionally, catalyzes the oxidative cleavage of heme at the alpha-methene bridge carbon, released as carbon monoxide (CO), to generate biliverdin IXalpha, while releasing the central heme iron chelate as ferrous iron. Affords protection against programmed cell death and this cytoprotective effect relies on its ability to catabolize free heme and prevent it from sensitizing cells to undergo apoptosis. In terms of biological role, catalyzes the oxidative cleavage of heme at the alpha-methene bridge carbon, released as carbon monoxide (CO), to generate biliverdin IXalpha, while releasing the central heme iron chelate as ferrous iron. This chain is Heme oxygenase 1 (Hmox1), found in Rattus norvegicus (Rat).